The chain runs to 589 residues: Transmembrane 9 superfamily member 1 (589 aa).

The N-terminal stretch at methionine 1–glycine 27 is a signal peptide. The N-linked (GlcNAc...) asparagine glycan is linked to asparagine 178. Transmembrane regions (helical) follow at residues leucine 237 to leucine 257, valine 310 to leucine 330, glycine 339 to valine 359, and valine 373 to valine 393. Asparagine 401 carries N-linked (GlcNAc...) asparagine glycosylation. Helical transmembrane passes span isoleucine 412 to isoleucine 432, glycine 482 to leucine 502, and serine 518 to alanine 538. Asparagine 542 carries N-linked (GlcNAc...) asparagine glycosylation. The helical transmembrane segment at phenylalanine 552–phenylalanine 572 threads the bilayer.

The protein belongs to the nonaspanin (TM9SF) (TC 9.A.2) family.

Its subcellular location is the lysosome membrane. The protein localises to the cytoplasmic vesicle. It localises to the autophagosome membrane. Plays an essential role in autophagy. The chain is Transmembrane 9 superfamily member 1 (Tm9sf1) from Rattus norvegicus (Rat).